Here is a 510-residue protein sequence, read N- to C-terminus: Aromatic-L-amino-acid decarboxylase (510 aa).

The segment covering 1–17 has biased composition (polar residues); it reads MSHIPISNTIPPKQTDG. A disordered region spans residues 1-29; the sequence is MSHIPISNTIPPKQTDGNGKANISPDKLD. Thr-117 lines the substrate pocket. The pyridoxal 5'-phosphate site is built by Ala-183, Ser-184, His-227, Asp-305, and Asn-334. Position 227 (His-227) interacts with substrate. Residue Lys-337 is modified to N6-(pyridoxal phosphate)lysine. Residues 358–384 form a disordered region; the sequence is NAFNVDPLYLKHDMQGSAPDYRHWQIP.

The protein belongs to the group II decarboxylase family. As to quaternary structure, homodimer. The cofactor is pyridoxal 5'-phosphate.

The enzyme catalyses L-dopa + H(+) = dopamine + CO2. It catalyses the reaction 5-hydroxy-L-tryptophan + H(+) = serotonin + CO2. Catalyzes the decarboxylation of L-3,4-dihydroxyphenylalanine (L-DOPA) to dopamine and L-5-hydroxytryptophan (5-HTP) to serotonin. Catalyzes the formation of serotonin more efficiently than dopamine. Displays no activity to tyrosine. Variation in the synthesis of bioamines may be a factor contributing to natural variation in life span. This Drosophila simulans (Fruit fly) protein is Aromatic-L-amino-acid decarboxylase (Ddc).